We begin with the raw amino-acid sequence, 128 residues long: Arginine decarboxylase proenzyme (128 aa).

Residue Ser76 is the Schiff-base intermediate with substrate; via pyruvic acid of the active site. Ser76 bears the Pyruvic acid (Ser); by autocatalysis mark. Catalysis depends on His81, which acts as the Proton acceptor; for processing activity. The active-site Proton donor; for catalytic activity is Cys96.

It belongs to the prokaryotic AdoMetDC family. Type 1 subfamily. Heterooctamer of four alpha and four beta chains arranged as a tetramer of alpha/beta heterodimers. Requires pyruvate as cofactor. Post-translationally, is synthesized initially as an inactive proenzyme. Formation of the active enzyme involves a self-maturation process in which the active site pyruvoyl group is generated from an internal serine residue via an autocatalytic post-translational modification. Two non-identical subunits are generated from the proenzyme in this reaction, and the pyruvate is formed at the N-terminus of the alpha chain, which is derived from the carboxyl end of the proenzyme. The post-translation cleavage follows an unusual pathway, termed non-hydrolytic serinolysis, in which the side chain hydroxyl group of the serine supplies its oxygen atom to form the C-terminus of the beta chain, while the remainder of the serine residue undergoes an oxidative deamination to produce ammonia and the pyruvoyl group blocking the N-terminus of the alpha chain.

The catalysed reaction is L-arginine + H(+) = agmatine + CO2. It functions in the pathway amine and polyamine biosynthesis; agmatine biosynthesis; agmatine from L-arginine: step 1/1. Specifically catalyzes the decarboxylation of L-arginine to agmatine. Has no S-adenosylmethionine decarboxylase (AdoMetDC) activity. This Metallosphaera sedula (strain ATCC 51363 / DSM 5348 / JCM 9185 / NBRC 15509 / TH2) protein is Arginine decarboxylase proenzyme.